We begin with the raw amino-acid sequence, 115 residues long: MAPQRMKNPPHPGLLIKSDLDGLGINITEAAKALDVTRAALSEIINGKRGISAKMAWKLSKAFTNSDPEFWLALQAKYDLSQVGEQCADKVRVLWQPSSLDNEGIEVNSSENKVK.

The HTH cro/C1-type domain maps to Ile16 to Phe70. Residues Ile27–Asn46 constitute a DNA-binding region (H-T-H motif).

Belongs to the VapA/VapI family.

The chain is Virulence-associated protein A' (vapA') from Dichelobacter nodosus (Bacteroides nodosus).